The chain runs to 157 residues: Transcriptional repressor NrdR (157 aa).

A compositionally biased stretch (polar residues) spans 1–11 (MQCPSCQNTDS). The interval 1–21 (MQCPSCQNTDSRVLESRSADT) is disordered. A zinc finger spans residues 3-34 (CPSCQNTDSRVLESRSADTGKSVRRRRECLNC). Residues 49 to 139 (ITVIKRSESK…VYRQFNGIND (91 aa)) form the ATP-cone domain.

Belongs to the NrdR family. Zn(2+) serves as cofactor.

Its function is as follows. Negatively regulates transcription of bacterial ribonucleotide reductase nrd genes and operons by binding to NrdR-boxes. This is Transcriptional repressor NrdR from Prochlorococcus marinus (strain MIT 9211).